We begin with the raw amino-acid sequence, 226 residues long: 7-cyano-7-deazaguanine synthase (226 aa).

Residue 10 to 20 coordinates ATP; it reads LSGGLDSATAA. Cysteine 191, cysteine 199, cysteine 202, and cysteine 205 together coordinate Zn(2+).

This sequence belongs to the QueC family. Zn(2+) is required as a cofactor.

The enzyme catalyses 7-carboxy-7-deazaguanine + NH4(+) + ATP = 7-cyano-7-deazaguanine + ADP + phosphate + H2O + H(+). Its pathway is purine metabolism; 7-cyano-7-deazaguanine biosynthesis. Catalyzes the ATP-dependent conversion of 7-carboxy-7-deazaguanine (CDG) to 7-cyano-7-deazaguanine (preQ(0)). The chain is 7-cyano-7-deazaguanine synthase from Parasynechococcus marenigrum (strain WH8102).